A 153-amino-acid chain; its full sequence is Small ribosomal subunit protein uS19 (153 aa).

The protein belongs to the universal ribosomal protein uS19 family.

This Elaeis oleifera (American oil palm) protein is Small ribosomal subunit protein uS19 (RPS15).